The primary structure comprises 160 residues: Major pollen allergen Car b 1 isoform 2 (160 aa).

This sequence belongs to the BetVI family.

This Carpinus betulus (European hornbeam) protein is Major pollen allergen Car b 1 isoform 2.